Reading from the N-terminus, the 710-residue chain is Tubulin polyglutamylase TTLL11 (710 aa).

The tract at residues 41-135 (VRVDAGAAGE…QRPVTVDSSK (95 aa)) is disordered. The segment covering 51-60 (PECKAGEEQP) has biased composition (basic and acidic residues). A compositionally biased stretch (low complexity) spans 64–82 (APAPAQPSAAEEGNTQVLQ). The segment covering 83–93 (RPPPTLPPSKP) has biased composition (pro residues). Polar residues predominate over residues 123 to 135 (NGSQRPVTVDSSK). Residues 128 to 480 (PVTVDSSKAR…EVKVAVIRDT (353 aa)) form the TTL domain. ATP-binding positions include Lys-249, 255–256 (QG), 282–285 (QEYI), and 295–297 (KFD). Residue Gln-255 coordinates a protein. L-glutamate is bound at residue Arg-321. 343 to 344 (TN) contacts ATP. L-glutamate contacts are provided by Tyr-345, Ser-346, and Lys-365. Mg(2+) contacts are provided by Asp-428, Glu-441, and Asn-443. The c-MTBD region stretch occupies residues 467–538 (LVDEEVKVAV…SICLKQVFPK (72 aa)). Lys-473 serves as a coordination point for L-glutamate. The interval 665-710 (GVPSGGRPPHRGPPQEPSPSAQPAGDNPPPRTSCANKLSHPRHTLS) is disordered.

The protein belongs to the tubulin--tyrosine ligase family. The cofactor is Mg(2+).

It localises to the cytoplasm. The protein resides in the cytoskeleton. It is found in the cilium basal body. It catalyses the reaction L-glutamyl-[protein] + L-glutamate + ATP = gamma-L-glutamyl-L-glutamyl-[protein] + ADP + phosphate + H(+). The catalysed reaction is (L-glutamyl)(n)-gamma-L-glutamyl-L-glutamyl-[protein] + L-glutamate + ATP = (L-glutamyl)(n+1)-gamma-L-glutamyl-L-glutamyl-[protein] + ADP + phosphate + H(+). Polyglutamylase which modifies tubulin, generating polyglutamate side chains of variable lengths on the gamma-carboxyl group of specific glutamate residues within the C-terminal tail of tubulin. Preferentially mediates ATP-dependent polyglutamate long side-chain elongation over the initiation step of the polyglutamylation reaction. Preferentially modifies the alpha-tubulin tail over a beta-tail. Required for CCSAP localization to both spindle and cilia microtubules. Promotes tubulin polyglutamylation which stimulates spastin/SPAST-mediated microtubule severing, thereby regulating microtubule functions. The protein is Tubulin polyglutamylase TTLL11 of Homo sapiens (Human).